Consider the following 310-residue polypeptide: MKTLTRNILRTAITVILVILAFVAIFRAWVYYTASPWTRDARFSADIVAIAPDVSGLISQVNVKDNQLVKKDQVLFVIDQPRYQKALAEAEADVAYYQTLAQEKRVEAGRRNKLGIQAMSREEIDQANNVLQTVEHQLAKAVASRDLARLDLERTEIRAPADGWVTNLNVYTGEFITRGSTAVALVKENTFYVMAYLEETKLEGVRPGYRAEITPLGSSKTIKGTVDSIAAGVTNASSSSDSKGMASVDSNLEWVRLAQRVPVRIRLDQQQGNLWPSGTTATVVITGKEDRDTSRANFFQKLAMRLREFG.

The chain crosses the membrane as a helical span at residues 12–32 (AITVILVILAFVAIFRAWVYY).

Belongs to the membrane fusion protein (MFP) (TC 8.A.1) family.

It is found in the cell inner membrane. Its function is as follows. Forms an efflux pump with AaeB. The protein is p-hydroxybenzoic acid efflux pump subunit AaeA of Klebsiella pneumoniae (strain 342).